An 805-amino-acid polypeptide reads, in one-letter code: Angiotensin-converting enzyme 2 (805 aa).

The N-terminal stretch at 1–17 is a signal peptide; sequence MSSSSWLLLSLVAVTAA. Residues 18 to 740 lie on the Extracellular side of the membrane; the sequence is QSTIEEQAKT…LGPPNQPPVS (723 aa). The 589-residue stretch at 19–607 folds into the Peptidase M2 domain; the sequence is STIEEQAKTF…QNKNSFVGWS (589 aa). The segment at 30-41 is interaction with SARS-CoV spike glycoprotein; that stretch reads DKFNHEAEDLFY. Asparagine 53 is a glycosylation site (N-linked (GlcNAc...) asparagine). The interaction with SARS-CoV spike glycoprotein stretch occupies residues 82–84; that stretch reads MYP. 2 N-linked (GlcNAc...) asparagine glycosylation sites follow: asparagine 90 and asparagine 103. A disulfide bridge connects residues cysteine 133 and cysteine 141. Arginine 169 is a binding site for chloride. Residue arginine 273 participates in substrate binding. Asparagine 322 is a glycosylation site (N-linked (GlcNAc...) asparagine). An intrachain disulfide couples cysteine 344 to cysteine 361. 345-346 is a substrate binding site; that stretch reads HP. Positions 353-357 are interaction with SARS-CoV spike glycoprotein; that stretch reads KGDFR. Histidine 374 is a Zn(2+) binding site. Glutamate 375 serves as the catalytic Proton acceptor. Residues histidine 378 and glutamate 402 each contribute to the Zn(2+) site. N-linked (GlcNAc...) asparagine glycosylation occurs at asparagine 432. 2 residues coordinate chloride: tryptophan 477 and lysine 481. The active-site Proton donor is the histidine 505. Tyrosine 515 provides a ligand contact to substrate. A disulfide bridge links cysteine 530 with cysteine 542. Asparagine 546 carries an N-linked (GlcNAc...) asparagine glycan. Residues 614-805 enclose the Collectrin-like domain; it reads ADQSIKVRIS…QNTDDVQTSF (192 aa). Residues 652–659 are essential for cleavage by ADAM17; it reads RQYFLKVK. N-linked (GlcNAc...) asparagine glycosylation is present at asparagine 690. The interval 697-716 is essential for cleavage by TMPRSS11D and TMPRSS2; the sequence is RTEVEKAIRMSRSRINDAFR. The helical transmembrane segment at 741-761 threads the bilayer; sequence IWLIVFGVVMGVIVVGIVILI. The Cytoplasmic segment spans residues 762-805; sequence FTGIRDRKKKNKARSGENPYASIDISKGENNPGFQNTDDVQTSF. Residues 772-805 form a disordered region; the sequence is NKARSGENPYASIDISKGENNPGFQNTDDVQTSF. The LIR signature appears at 778–786; it reads ENPYASIDI. Tyrosine 781 carries the post-translational modification Phosphotyrosine. The short motif at 781–784 is the Endocytic sorting signal element; the sequence is YASI. Positions 781–785 match the SH2-binding motif; it reads YASID. Serine 783 carries the post-translational modification Phosphoserine. Lysine 788 is covalently cross-linked (Glycyl lysine isopeptide (Lys-Gly) (interchain with G-Cter in ubiquitin)). The span at 789-805 shows a compositional bias: polar residues; the sequence is GENNPGFQNTDDVQTSF. The PTB signature appears at 792-795; that stretch reads NPGF. The PDZ-binding motif lies at 803–805; sequence TSF.

The protein belongs to the peptidase M2 family. Homodimer. Interacts with the catalytically active form of TMPRSS2. Interacts with SLC6A19; this interaction is essential for expression and function of SLC6A19 in intestine. Interacts with ITGA5:ITGB1. Probably interacts (via endocytic sorting signal motif) with AP2M1; the interaction is inhibited by phosphorylation of Tyr-781. Interacts (via PDZ-binding motif) with NHERF1 (via PDZ domains); the interaction may enhance ACE2 membrane residence. In terms of assembly, (Microbial infection) Interacts with SARS coronavirus/SARS-CoV spike protein. As to quaternary structure, (Microbial infection) Interacts with SARS coronavirus-2/SARS-CoV-2 spike protein (via RBD domain). (Microbial infection) Interacts with human coronavirus NL63 spike protein. In terms of assembly, (Microbial infection) Interacts with human coronavirus NL63/HCoV-NL63 spike glycoprotein. As to quaternary structure, (Microbial infection) Interacts with SARS coronavirus-2/SARS-CoV-2 spike protein; the interaction is increased by AVP/Arg-vasopressin with which they may form a complex. Zn(2+) is required as a cofactor. Chloride serves as cofactor. Post-translationally, N-glycosylation on Asn-90 may limit SARS infectivity. In terms of processing, proteolytic cleavage by ADAM17 generates a secreted form. Also cleaved by serine proteases: TMPRSS2, TMPRSS11D and HPN/TMPRSS1. Phosphorylated. Phosphorylation at Tyr-781 probably inhibits interaction with AP2M1 and enables interactions with proteins containing SH2 domains. Post-translationally, ubiquitinated. Ubiquitinated on Lys-788 via 'Lys-48'-linked ubiquitin. 'Lys-48'-linked deubiquitinated by USP50 on the Lys-788; leading to its stabilization. In terms of tissue distribution, expressed in endothelial cells from small and large arteries, and in arterial smooth muscle cells (at protein level). Expressed in enterocytes of the small intestine, Leydig cells and Sertoli cells (at protein level). Expressed in the renal proximal tubule and the small intestine (at protein level). Expressed in heart, kidney, testis, and gastrointestinal system (at protein level). In lung, expressed at low levels in some alveolar type 2 cells, the expression seems to be individual-specific (at protein level). Expressed in nasal epithelial cells (at protein level). Coexpressed with TMPRSS2 within some lung alveolar type 2 cells, ileal absorptive enterocytes, intestinal epithelial cells, cornea, gallbladder and nasal goblet secretory cells. Coexpressed with TMPRSS4 within mature enterocytes. Expressed in nasal and bronchial epithelial cells (at protein level).

It is found in the secreted. It localises to the cell membrane. The protein resides in the cytoplasm. The protein localises to the cell projection. Its subcellular location is the cilium. It is found in the apical cell membrane. The catalysed reaction is angiotensin II + H2O = angiotensin-(1-7) + L-phenylalanine. It carries out the reaction angiotensin I + H2O = angiotensin-(1-9) + L-leucine. The enzyme catalyses bradykinin(1-8) + H2O = bradykinin(1-7) + L-phenylalanine. It catalyses the reaction neurotensin + H2O = neurotensin-(1-12) + L-leucine. The catalysed reaction is neurotensin-(1-8) + H2O = neurotensin-(1-7) + L-arginine. It carries out the reaction kinetensin + H2O = kinetensin-(1-8) + L-leucine. The enzyme catalyses dynorphin A-(1-13) + H2O = dynorphin A-(1-12) + L-lysine. It catalyses the reaction apelin-13 + H2O = apelin-12 + L-phenylalanine. The catalysed reaction is [Pyr1]apelin-13 + H2O = [Pyr1]apelin-12 + L-phenylalanine. It carries out the reaction apelin-17 + H2O = apelin-16 + L-phenylalanine. The enzyme catalyses beta-casomorphin-7 + H2O = beta-casomorphin-6 + L-isoleucine. It catalyses the reaction neocasomorphin + H2O = neocasomorphin-(1-5) + L-isoleucine. Regulated by chloride and fluoride, but not bromide. Chloride increases angiotensin I and decreases angiotensin II cleavage. Inhibited by MLN-4760, cFP_Leu, and EDTA, but not by the ACE inhibitors lisinopril, captopril and enalaprilat. Highly potent and selective in vitro ACE2 inhibitors were identified. Its function is as follows. Essential counter-regulatory carboxypeptidase of the renin-angiotensin hormone system that is a critical regulator of blood volume, systemic vascular resistance, and thus cardiovascular homeostasis. Converts angiotensin I to angiotensin 1-9, a nine-amino acid peptide with anti-hypertrophic effects in cardiomyocytes, and angiotensin II to angiotensin 1-7, which then acts as a beneficial vasodilator and anti-proliferation agent, counterbalancing the actions of the vasoconstrictor angiotensin II. Also removes the C-terminal residue from three other vasoactive peptides, neurotensin, kinetensin, and des-Arg bradykinin, but is not active on bradykinin. Also cleaves other biological peptides, such as apelins (apelin-13, [Pyr1]apelin-13, apelin-17, apelin-36), casomorphins (beta-casomorphin-7, neocasomorphin) and dynorphin A with high efficiency. In addition, ACE2 C-terminus is homologous to collectrin and is responsible for the trafficking of the neutral amino acid transporter SL6A19 to the plasma membrane of gut epithelial cells via direct interaction, regulating its expression on the cell surface and its catalytic activity. Functionally, (Microbial infection) Acts as a receptor for human coronaviruses SARS-CoV and SARS-CoV-2, as well as human coronavirus NL63/HCoV-NL63. Non-functional as a carboxypeptidase. In terms of biological role, (Microbial infection) Non-functional as a receptor for human coronavirus SARS-CoV-2. This chain is Angiotensin-converting enzyme 2, found in Homo sapiens (Human).